The following is a 456-amino-acid chain: tRNA(Ile)-lysidine synthase (456 aa).

Position 27-32 (27-32) interacts with ATP; the sequence is SGGVDS.

It belongs to the tRNA(Ile)-lysidine synthase family.

Its subcellular location is the cytoplasm. It catalyses the reaction cytidine(34) in tRNA(Ile2) + L-lysine + ATP = lysidine(34) in tRNA(Ile2) + AMP + diphosphate + H(+). Its function is as follows. Ligates lysine onto the cytidine present at position 34 of the AUA codon-specific tRNA(Ile) that contains the anticodon CAU, in an ATP-dependent manner. Cytidine is converted to lysidine, thus changing the amino acid specificity of the tRNA from methionine to isoleucine. In Vibrio atlanticus (strain LGP32) (Vibrio splendidus (strain Mel32)), this protein is tRNA(Ile)-lysidine synthase.